Here is a 309-residue protein sequence, read N- to C-terminus: Homoserine O-succinyltransferase (309 aa).

Cys-142 (acyl-thioester intermediate) is an active-site residue. Residues Lys-163 and Ser-192 each contribute to the substrate site. His-235 (proton acceptor) is an active-site residue. Glu-237 is an active-site residue. Position 249 (Arg-249) interacts with substrate.

This sequence belongs to the MetA family. Homodimer.

The protein resides in the cytoplasm. The enzyme catalyses L-homoserine + succinyl-CoA = O-succinyl-L-homoserine + CoA. Its pathway is amino-acid biosynthesis; L-methionine biosynthesis via de novo pathway; O-succinyl-L-homoserine from L-homoserine: step 1/1. Its function is as follows. Transfers a succinyl group from succinyl-CoA to L-homoserine, forming succinyl-L-homoserine. The protein is Homoserine O-succinyltransferase of Escherichia coli O127:H6 (strain E2348/69 / EPEC).